A 177-amino-acid chain; its full sequence is Dynein light chain Tctex-type 5-A (177 aa).

It belongs to the dynein light chain Tctex-type family.

In Xenopus laevis (African clawed frog), this protein is Dynein light chain Tctex-type 5-A (Dynlt5-a).